Consider the following 242-residue polypeptide: Capsid protein (242 aa).

The short motif at 1–42 (MPYKRKLTSYFPQSKRFRGAKSGMAVVKTSASRRLYKKGKRK) is the Bipartite nuclear localization signal element.

The protein belongs to the geminiviridae capsid protein family. As to quaternary structure, homomultimer. Binds to single-stranded and double-stranded viral DNA. Interacts (via nuclear localization signal) with host importin alpha-1a.

It localises to the virion. Its subcellular location is the host nucleus. Functionally, encapsidates the viral genome into characteristic twinned ('geminate') particles. Binds the genomic viral ssDNA and shuttles it into and out of the cell nucleus. Plays a role in protection of the genome from degradation, virus acquisition and transmission by insect vectors, infectivity, and systemic movement. The CP of monopartite geminiviruses is absolutely essential for virus movement. In Solanum lycopersicum (Tomato), this protein is Capsid protein.